The following is a 351-amino-acid chain: Molybdenum import ATP-binding protein ModC (351 aa).

Positions 1–229 (MLKINVKKQL…PLFLPWKLED (229 aa)) constitute an ABC transporter domain. 31-38 (GLSGSGKT) lines the ATP pocket. In terms of domain architecture, Mop spans 289-351 (KTSIRNILHG…FAQIKAVSVL (63 aa)).

Belongs to the ABC transporter superfamily. Molybdate importer (TC 3.A.1.8) family. The complex is composed of two ATP-binding proteins (ModC), two transmembrane proteins (ModB) and a solute-binding protein (ModA).

The protein resides in the cell inner membrane. The enzyme catalyses molybdate(out) + ATP + H2O = molybdate(in) + ADP + phosphate + H(+). Its function is as follows. Part of the ABC transporter complex ModABC involved in molybdenum import. Responsible for energy coupling to the transport system. The sequence is that of Molybdenum import ATP-binding protein ModC from Pasteurella multocida (strain Pm70).